A 782-amino-acid polypeptide reads, in one-letter code: Ribosome biogenesis protein ERB1 (782 aa).

Disordered stretches follow at residues Met-1–Lys-123 and Pro-339–Glu-361. The segment covering Ser-35 to Glu-86 has biased composition (acidic residues). The segment covering Val-105–Lys-123 has biased composition (basic and acidic residues). 7 WD repeats span residues Gly-433–Ser-472, Asn-476–Ala-516, Thr-567–Pro-609, Lys-612–Val-650, Pro-653–Lys-692, Phe-696–Glu-736, and Val-752–Met-782.

The protein belongs to the WD repeat BOP1/ERB1 family. As to quaternary structure, component of the NOP7 complex, composed of ERB1, NOP7 and YTM1. The complex is held together by ERB1, which interacts with NOP7 via its N-terminal domain and with YTM1 via a high-affinity interaction between the seven-bladed beta-propeller domains of the 2 proteins. The NOP7 complex associates with the 66S pre-ribosome.

The protein resides in the nucleus. The protein localises to the nucleolus. It localises to the nucleoplasm. Component of the NOP7 complex, which is required for maturation of the 25S and 5.8S ribosomal RNAs and formation of the 60S ribosome. The sequence is that of Ribosome biogenesis protein ERB1 from Chaetomium globosum (strain ATCC 6205 / CBS 148.51 / DSM 1962 / NBRC 6347 / NRRL 1970) (Soil fungus).